We begin with the raw amino-acid sequence, 532 residues long: Metal-staphylopine-binding protein CntA (532 aa).

An N-terminal signal peptide occupies residues 1–20; that stretch reads MRKLTKMSAMLLASGLILTG. Residue C21 is the site of N-palmitoyl cysteine attachment. The S-diacylglycerol cysteine moiety is linked to residue C21. Staphylopine is bound by residues R165, R418, and N448.

The protein belongs to the bacterial solute-binding protein 5 family. The complex is composed of two ATP-binding proteins (CntD and CntF), two transmembrane proteins (CntB and CntC) and a solute-binding protein (CntA).

The protein resides in the cell membrane. Nickel/cobalt import is reduced in the presence of zinc. Part of the ABC transporter complex CntABCDF (Opp1) involved in the uptake of metal in complex with the metallophore staphylopine (StP). Involved in the import of divalent metals ions such as nickel, cobalt and zinc. Binds the metal via the metallophore StP, and transfers the StP-metal complex to the membrane-bound permease. Binds one molecule of StP/metal. Binds StP/Co(2+) and StP/Ni(2+) tighter than StP/Zn(2+). Plays a major role in nickel/cobalt import in zinc-depleted conditions. Contributes to virulence. Required for full urease activity in vitro. The protein is Metal-staphylopine-binding protein CntA of Staphylococcus aureus (strain NCTC 8325 / PS 47).